The sequence spans 206 residues: Inner membrane-spanning protein YciB (206 aa).

5 helical membrane passes run proline 50 to leucine 70, glycine 78 to histidine 98, tryptophan 105 to leucine 125, leucine 150 to phenylalanine 170, and alanine 173 to isoleucine 193.

The protein belongs to the YciB family.

Its subcellular location is the cell inner membrane. Functionally, plays a role in cell envelope biogenesis, maintenance of cell envelope integrity and membrane homeostasis. The sequence is that of Inner membrane-spanning protein YciB from Herminiimonas arsenicoxydans.